Consider the following 71-residue polypeptide: Protein KleB (71 aa).

The H-T-H motif DNA-binding region spans 9 to 28; it reads VTTNCRRCGKSISTLSRSLI.

This is Protein KleB (kleB) from Escherichia coli.